We begin with the raw amino-acid sequence, 366 residues long: 3-dehydroquinate synthase (366 aa).

NAD(+) contacts are provided by residues 69 to 74, 103 to 107, 127 to 128, Lys140, and Lys149; these read DGEAFK, GVIGD, and TT. Zn(2+) is bound by residues Glu182, His245, and His262.

It belongs to the sugar phosphate cyclases superfamily. Dehydroquinate synthase family. It depends on Co(2+) as a cofactor. The cofactor is Zn(2+). NAD(+) is required as a cofactor.

It is found in the cytoplasm. The catalysed reaction is 7-phospho-2-dehydro-3-deoxy-D-arabino-heptonate = 3-dehydroquinate + phosphate. Its pathway is metabolic intermediate biosynthesis; chorismate biosynthesis; chorismate from D-erythrose 4-phosphate and phosphoenolpyruvate: step 2/7. In terms of biological role, catalyzes the conversion of 3-deoxy-D-arabino-heptulosonate 7-phosphate (DAHP) to dehydroquinate (DHQ). In Pseudomonas fluorescens (strain Pf0-1), this protein is 3-dehydroquinate synthase.